We begin with the raw amino-acid sequence, 171 residues long: uncharacterized protein (171 aa).

This is an uncharacterized protein from Escherichia coli O157:H7.